The chain runs to 92 residues: UPF0223 protein SP_1404 (92 aa).

It belongs to the UPF0223 family.

The polypeptide is UPF0223 protein SP_1404 (Streptococcus pneumoniae serotype 4 (strain ATCC BAA-334 / TIGR4)).